Here is a 183-residue protein sequence, read N- to C-terminus: MRRHRQSGFTLLEVLLVAMLMGLVATAVTLSMGGARGDRELDKQARRFMATLQQAQEYSVMDGRLVGLRIEDHGWQFMQRAAKDRKWQALTGDKILGQVQLPDTMLLAIELEGFSWRTESDEKTERGRDEKERTPQVLIFPGGELSPFVLTLTQQDEDVRYLRTVKADEFGRLRLLQDEEEEE.

Positions 1 to 8 are cleaved as a propeptide — leader sequence; it reads MRRHRQSG. Phe9 carries the post-translational modification N-methylphenylalanine. The helical transmembrane segment at 9 to 28 threads the bilayer; sequence FTLLEVLLVAMLMGLVATAV.

Belongs to the GSP H family. In terms of assembly, type II secretion is composed of four main components: the outer membrane complex, the inner membrane complex, the cytoplasmic secretion ATPase and the periplasm-spanning pseudopilus. Interacts with core component ExeG. Post-translationally, cleaved by prepilin peptidase. Methylated by prepilin peptidase at the amino group of the N-terminal phenylalanine once the leader sequence is cleaved by prepilin peptidase.

The protein resides in the cell inner membrane. Component of the type II secretion system required for the energy-dependent secretion of extracellular factors such as proteases and toxins from the periplasm. Part of the pseudopilus tip complex that is critical for the recognition and binding of secretion substrates. The chain is Type II secretion system protein H (exeH) from Aeromonas hydrophila.